The following is a 198-amino-acid chain: Recombination protein RecR (198 aa).

The C4-type zinc-finger motif lies at 57 to 72; sequence CSVCGHITDRDPCYIC. A Toprim domain is found at 80 to 175; that stretch reads SVVCVVQEPK…KVTRIAHGLP (96 aa).

This sequence belongs to the RecR family.

In terms of biological role, may play a role in DNA repair. It seems to be involved in an RecBC-independent recombinational process of DNA repair. It may act with RecF and RecO. In Bacillus thuringiensis (strain Al Hakam), this protein is Recombination protein RecR.